The primary structure comprises 156 residues: Small ribosomal subunit protein uS7 (156 aa).

It belongs to the universal ribosomal protein uS7 family. In terms of assembly, part of the 30S ribosomal subunit. Contacts proteins S9 and S11.

One of the primary rRNA binding proteins, it binds directly to 16S rRNA where it nucleates assembly of the head domain of the 30S subunit. Is located at the subunit interface close to the decoding center, probably blocks exit of the E-site tRNA. This chain is Small ribosomal subunit protein uS7, found in Limosilactobacillus reuteri (strain DSM 20016) (Lactobacillus reuteri).